Here is a 354-residue protein sequence, read N- to C-terminus: Uroporphyrinogen decarboxylase (354 aa).

Substrate-binding positions include 27-31 (RQAGR), D77, Y154, S209, and H327.

This sequence belongs to the uroporphyrinogen decarboxylase family. In terms of assembly, homodimer.

Its subcellular location is the cytoplasm. The enzyme catalyses uroporphyrinogen III + 4 H(+) = coproporphyrinogen III + 4 CO2. The protein operates within porphyrin-containing compound metabolism; protoporphyrin-IX biosynthesis; coproporphyrinogen-III from 5-aminolevulinate: step 4/4. Functionally, catalyzes the decarboxylation of four acetate groups of uroporphyrinogen-III to yield coproporphyrinogen-III. The chain is Uroporphyrinogen decarboxylase from Shewanella halifaxensis (strain HAW-EB4).